A 563-amino-acid chain; its full sequence is Delta-1-pyrroline-5-carboxylate dehydrogenase, mitochondrial (563 aa).

Residues 1–24 (MLLRSAALCRALLARRGRAAGLCR) constitute a mitochondrion transit peptide. Ser44 is modified (phosphoserine). Lys52 is modified (N6-acetyllysine). N6-acetyllysine; alternate occurs at positions 93, 99, 114, 130, and 175. Lys93, Lys99, Lys114, Lys130, and Lys175 each carry N6-succinyllysine; alternate. Residues Ser208, Lys233, and 286–290 (GSVPT) contribute to the NAD(+) site. Glu314 (proton acceptor) is an active-site residue. Lys318 is subject to N6-acetyllysine. The residue at position 347 (Lys347) is an N6-succinyllysine. Cys348 (nucleophile) is an active-site residue. N6-acetyllysine is present on residues Lys365 and Lys376. Lys395 carries the post-translational modification N6-succinyllysine. Position 447 (Glu447) interacts with NAD(+). Lys509 carries the N6-acetyllysine; alternate modification. Lys509 carries the post-translational modification N6-succinyllysine; alternate. Position 513 (Ser513) interacts with substrate. The residue at position 531 (Lys531) is an N6-acetyllysine.

Belongs to the aldehyde dehydrogenase family. As to quaternary structure, homodimer.

The protein localises to the mitochondrion matrix. It carries out the reaction L-glutamate 5-semialdehyde + NAD(+) + H2O = L-glutamate + NADH + 2 H(+). The protein operates within amino-acid degradation; L-proline degradation into L-glutamate; L-glutamate from L-proline: step 2/2. In terms of biological role, irreversible conversion of delta-1-pyrroline-5-carboxylate (P5C), derived either from proline or ornithine, to glutamate. This is a necessary step in the pathway interconnecting the urea and tricarboxylic acid cycles. The preferred substrate is glutamic gamma-semialdehyde, other substrates include succinic, glutaric and adipic semialdehydes. The sequence is that of Delta-1-pyrroline-5-carboxylate dehydrogenase, mitochondrial (ALDH4A1) from Bos taurus (Bovine).